The following is a 431-amino-acid chain: Adenylosuccinate synthetase (431 aa).

Residues 12 to 18 (GDEGKGK) and 40 to 42 (GHT) each bind GTP. The active-site Proton acceptor is the D13. Mg(2+) contacts are provided by D13 and G40. IMP-binding positions include 13 to 16 (DEGK), 38 to 41 (NAGH), T129, R143, Q224, T239, and R303. Catalysis depends on H41, which acts as the Proton donor. Residue 299–305 (VTTGRAR) coordinates substrate. Residues R305, 331-333 (KLD), and 413-415 (GVG) contribute to the GTP site.

The protein belongs to the adenylosuccinate synthetase family. Homodimer. Mg(2+) is required as a cofactor.

It is found in the cytoplasm. It carries out the reaction IMP + L-aspartate + GTP = N(6)-(1,2-dicarboxyethyl)-AMP + GDP + phosphate + 2 H(+). The protein operates within purine metabolism; AMP biosynthesis via de novo pathway; AMP from IMP: step 1/2. Plays an important role in the de novo pathway of purine nucleotide biosynthesis. Catalyzes the first committed step in the biosynthesis of AMP from IMP. In Mycobacteroides abscessus (strain ATCC 19977 / DSM 44196 / CCUG 20993 / CIP 104536 / JCM 13569 / NCTC 13031 / TMC 1543 / L948) (Mycobacterium abscessus), this protein is Adenylosuccinate synthetase.